The chain runs to 109 residues: Thioredoxin (109 aa).

In terms of domain architecture, Thioredoxin spans 2 to 109 (TNCIVELTDG…LKDFLNLYLK (108 aa)). A disulfide bridge links cysteine 33 with cysteine 36.

The protein belongs to the thioredoxin family.

Functionally, participates in various redox reactions through the reversible oxidation of its active center dithiol to a disulfide and catalyzes dithiol-disulfide exchange reactions. The sequence is that of Thioredoxin (trxA) from Buchnera aphidicola subsp. Baizongia pistaciae (strain Bp).